A 295-amino-acid polypeptide reads, in one-letter code: Delta-1-pyrroline-5-carboxylate reductase apf3 (295 aa).

Belongs to the pyrroline-5-carboxylate reductase family.

It participates in secondary metabolite biosynthesis. Its function is as follows. Delta-1-pyrroline-5-carboxylate reductase; part of the gene cluster that mediates the biosynthesis of the cyclic tetrapeptide apicidin F (APF). The non-ribosomal peptide synthetase apf1 incorporates four different amino acids to produce apicidin F: L-phenylalanine, D-pipecolic acid (D-pip), N-methoxy-L-tryptophan and L-2-aminooctanedioic acid. L-Phenylalanine is the only proteinogenic amino acid directly used by apf1. The 3 other apf1 substrates are non-proteinogenic and have to be modified by other enzymes of the cluster. Lysine is converted to delta-1-pyrroline-5-carboxylate (P5C) which is reduced to L-pipecolic acid (L-pip) by apf3. L-pip is epimerized to D-pip, probably by apf1 activity, prior to incorporation. L-Tryptophan is N-oxidyzed by one of the cytochrome P450 monooxygenases (apf7 or apf8), and further methylated at the hydroxy group by the O-methyltransferase apf6 to yield N-methoxy-L-tryptophan. The synthesis of the fourth apf1 substrate is more complex. The fatty acid synthase apf5 is involved in the synthesis of the octanoic acid backbone of L-2-aminooctanedioic acid by fixing one acetyl-CoA unit and three malonyl-CoA units. Then one of the cytochrome P450 monooxygenases (apf7 or apf8) may oxidize this backbone to 2-oxooctanoic acid. The aminotransferase apf4 is predicted to catalyze the exchange of the keto group with an amino group. The next step would be the oxidation of 2-aminooctanoic acid by one of the cytochrome P450 monooxygenases (apf7 or apf8). The last step is the oxidation of 2-amino-8-hydroxyoctanoic acid to 2-aminooctanedioic acid is catalyzed by the FAD-dependent monooxygenase apf9. The sequence is that of Delta-1-pyrroline-5-carboxylate reductase apf3 from Gibberella fujikuroi (strain CBS 195.34 / IMI 58289 / NRRL A-6831) (Bakanae and foot rot disease fungus).